We begin with the raw amino-acid sequence, 246 residues long: Mast cell protease 1 (246 aa).

Positions 1–18 (MQALLFLMALLLPSGAGA) are cleaved as a signal peptide. Residues 19–20 (EE) constitute a propeptide, activation peptide. A Peptidase S1 domain is found at 21–244 (IIGGVEARPH…YVPWIKTVIN (224 aa)). Cysteine 50 and cysteine 66 are joined by a disulfide. Residue histidine 65 is the Charge relay system of the active site. An N-linked (GlcNAc...) asparagine glycan is attached at asparagine 102. Aspartate 109 serves as the catalytic Charge relay system. 2 cysteine pairs are disulfide-bonded: cysteine 143/cysteine 208 and cysteine 174/cysteine 187. Serine 202 functions as the Charge relay system in the catalytic mechanism.

It belongs to the peptidase S1 family. Granzyme subfamily. In terms of tissue distribution, mucosal mast cells.

It is found in the secreted. It localises to the cytoplasmic granule. Functionally, has a chymotrypsin-like activity. The sequence is that of Mast cell protease 1 (Mcpt1) from Mus musculus (Mouse).